Reading from the N-terminus, the 285-residue chain is Putative quercetin 2,3-dioxygenase PA3240 (285 aa).

Residues H60, H62, H104, and E106 each coordinate a divalent metal cation.

It belongs to the pirin family. It depends on a divalent metal cation as a cofactor.

The enzyme catalyses quercetin + O2 = 2-(3,4-dihydroxybenzoyloxy)-4,6-dihydroxybenzoate + CO. It participates in flavonoid metabolism; quercetin degradation. Putative quercetin 2,3-dioxygenase. In Pseudomonas aeruginosa (strain ATCC 15692 / DSM 22644 / CIP 104116 / JCM 14847 / LMG 12228 / 1C / PRS 101 / PAO1), this protein is Putative quercetin 2,3-dioxygenase PA3240.